A 155-amino-acid chain; its full sequence is Endoribonuclease YbeY (155 aa).

The Zn(2+) site is built by H114, H118, and H124.

This sequence belongs to the endoribonuclease YbeY family. It depends on Zn(2+) as a cofactor.

It is found in the cytoplasm. Functionally, single strand-specific metallo-endoribonuclease involved in late-stage 70S ribosome quality control and in maturation of the 3' terminus of the 16S rRNA. The chain is Endoribonuclease YbeY from Tolumonas auensis (strain DSM 9187 / NBRC 110442 / TA 4).